The following is a 328-amino-acid chain: Biotin synthase (328 aa).

The 220-residue stretch at 41 to 260 (TAIETASLLS…VALARILMPA (220 aa)) folds into the Radical SAM core domain. [4Fe-4S] cluster is bound by residues cysteine 56, cysteine 60, and cysteine 63. Positions 100, 131, 191, and 264 each coordinate [2Fe-2S] cluster.

This sequence belongs to the radical SAM superfamily. Biotin synthase family. As to quaternary structure, homodimer. It depends on [4Fe-4S] cluster as a cofactor. [2Fe-2S] cluster serves as cofactor.

The catalysed reaction is (4R,5S)-dethiobiotin + (sulfur carrier)-SH + 2 reduced [2Fe-2S]-[ferredoxin] + 2 S-adenosyl-L-methionine = (sulfur carrier)-H + biotin + 2 5'-deoxyadenosine + 2 L-methionine + 2 oxidized [2Fe-2S]-[ferredoxin]. The protein operates within cofactor biosynthesis; biotin biosynthesis; biotin from 7,8-diaminononanoate: step 2/2. Its function is as follows. Catalyzes the conversion of dethiobiotin (DTB) to biotin by the insertion of a sulfur atom into dethiobiotin via a radical-based mechanism. The sequence is that of Biotin synthase from Cereibacter sphaeroides (strain ATCC 17023 / DSM 158 / JCM 6121 / CCUG 31486 / LMG 2827 / NBRC 12203 / NCIMB 8253 / ATH 2.4.1.) (Rhodobacter sphaeroides).